Here is a 331-residue protein sequence, read N- to C-terminus: Glycerol-3-phosphate dehydrogenase [NAD(P)+] (331 aa).

NADPH is bound by residues Trp11 and Lys101. The sn-glycerol 3-phosphate site is built by Lys101, Gly132, and Ser134. Position 136 (Ala136) interacts with NADPH. Sn-glycerol 3-phosphate is bound by residues Lys188, Asp241, Ser251, Arg252, and Asn253. Lys188 (proton acceptor) is an active-site residue. NADPH is bound at residue Arg252. Glu278 serves as a coordination point for NADPH.

Belongs to the NAD-dependent glycerol-3-phosphate dehydrogenase family.

The protein resides in the cytoplasm. The catalysed reaction is sn-glycerol 3-phosphate + NAD(+) = dihydroxyacetone phosphate + NADH + H(+). It catalyses the reaction sn-glycerol 3-phosphate + NADP(+) = dihydroxyacetone phosphate + NADPH + H(+). Its pathway is membrane lipid metabolism; glycerophospholipid metabolism. Functionally, catalyzes the reduction of the glycolytic intermediate dihydroxyacetone phosphate (DHAP) to sn-glycerol 3-phosphate (G3P), the key precursor for phospholipid synthesis. This is Glycerol-3-phosphate dehydrogenase [NAD(P)+] from Phytoplasma mali (strain AT).